A 162-amino-acid chain; its full sequence is SCF ubiquitin ligase complex protein SKP1b (162 aa).

Serine 2 carries the N-acetylserine modification. Positions 100–162 (ILAANYLDIK…NEWCEDKGGN (63 aa)) are interaction with the F-box domain of F-box proteins. Proline 143 carries the post-translational modification 4-hydroxyproline. The O-linked (GlcNAc...) hydroxyproline glycan is linked to proline 143.

It belongs to the SKP1 family. As to quaternary structure, multiprotein complex (SCF) with cullin and F-box-containing protein. Capable of undergoing aggregation. Post-translationally, O-linked glycan consists of linear Gal-Gal-Fuc-Gal-GlcNAc. Not glycosylated in prespore cells. In terms of processing, fpaA and fpaB seem to be identically glycosylated. Glycosylation is required for nuclear enrichment. Post-translationally, hydroxylated by phyA.

It is found in the cytoplasm. The protein resides in the nucleus. This Dictyostelium discoideum (Social amoeba) protein is SCF ubiquitin ligase complex protein SKP1b (fpaB-1).